We begin with the raw amino-acid sequence, 79 residues long: D-alanyl carrier protein (79 aa).

The Carrier domain occupies 1 to 76; that stretch reads MKEQIFDIIE…KIAARVQEKK (76 aa). Serine 34 carries the post-translational modification O-(pantetheine 4'-phosphoryl)serine.

This sequence belongs to the DltC family. Post-translationally, 4'-phosphopantetheine is transferred from CoA to a specific serine of apo-DCP.

It localises to the cytoplasm. It participates in cell wall biogenesis; lipoteichoic acid biosynthesis. Its function is as follows. Carrier protein involved in the D-alanylation of lipoteichoic acid (LTA). The loading of thioester-linked D-alanine onto DltC is catalyzed by D-alanine--D-alanyl carrier protein ligase DltA. The DltC-carried D-alanyl group is further transferred to cell membrane phosphatidylglycerol (PG) by forming an ester bond, probably catalyzed by DltD. D-alanylation of LTA plays an important role in modulating the properties of the cell wall in Gram-positive bacteria, influencing the net charge of the cell wall. The sequence is that of D-alanyl carrier protein from Lactococcus lactis subsp. lactis (strain IL1403) (Streptococcus lactis).